Here is a 502-residue protein sequence, read N- to C-terminus: UPF0371 protein CTC_00401 (502 aa).

Belongs to the UPF0371 family.

This chain is UPF0371 protein CTC_00401, found in Clostridium tetani (strain Massachusetts / E88).